The primary structure comprises 166 residues: MTRKQKRLALIASGAVVVSLAVGLVMFALRDNIVFFYSPTELAEKPATNGARLRIGGLVKPASLDRQGDQTVRFTVTDMKHDVAVTYTGLLPDLFREGQGVVAEGALRPDGVFHADSVLAKHDERYMPREVADALKKQGVWQEEGKSEGKPSAIPAQTAPQGAQAY.

Residues 1–7 are Cytoplasmic-facing; sequence MTRKQKR. Residues 8–28 form a helical; Signal-anchor for type II membrane protein membrane-spanning segment; the sequence is LALIASGAVVVSLAVGLVMFA. Over 29-166 the chain is Periplasmic; sequence LRDNIVFFYS…QTAPQGAQAY (138 aa). Heme contacts are provided by histidine 122 and tyrosine 126. Positions 139–166 are disordered; sequence GVWQEEGKSEGKPSAIPAQTAPQGAQAY.

It belongs to the CcmE/CycJ family.

The protein localises to the cell inner membrane. Functionally, heme chaperone required for the biogenesis of c-type cytochromes. Transiently binds heme delivered by CcmC and transfers the heme to apo-cytochromes in a process facilitated by CcmF and CcmH. This is Cytochrome c-type biogenesis protein CcmE from Methylocella silvestris (strain DSM 15510 / CIP 108128 / LMG 27833 / NCIMB 13906 / BL2).